A 394-amino-acid chain; its full sequence is Phosphopentomutase (394 aa).

Aspartate 13, aspartate 286, histidine 291, aspartate 327, histidine 328, and histidine 339 together coordinate Mn(2+).

Belongs to the phosphopentomutase family. It depends on Mn(2+) as a cofactor.

The protein localises to the cytoplasm. The catalysed reaction is 2-deoxy-alpha-D-ribose 1-phosphate = 2-deoxy-D-ribose 5-phosphate. The enzyme catalyses alpha-D-ribose 1-phosphate = D-ribose 5-phosphate. The protein operates within carbohydrate degradation; 2-deoxy-D-ribose 1-phosphate degradation; D-glyceraldehyde 3-phosphate and acetaldehyde from 2-deoxy-alpha-D-ribose 1-phosphate: step 1/2. Isomerase that catalyzes the conversion of deoxy-ribose 1-phosphate (dRib-1-P) and ribose 1-phosphate (Rib-1-P) to deoxy-ribose 5-phosphate (dRib-5-P) and ribose 5-phosphate (Rib-5-P), respectively. The protein is Phosphopentomutase of Bacillus anthracis (strain A0248).